A 158-amino-acid polypeptide reads, in one-letter code: Phosphopantetheine adenylyltransferase (158 aa).

Serine 10 lines the substrate pocket. Residues 10–11 (SF) and histidine 18 each bind ATP. 3 residues coordinate substrate: lysine 42, leucine 74, and arginine 88. Residues 89–91 (GLR), glutamate 99, and 124–130 (YANISSS) contribute to the ATP site.

Belongs to the bacterial CoaD family. As to quaternary structure, homohexamer. Mg(2+) serves as cofactor.

The protein resides in the cytoplasm. It catalyses the reaction (R)-4'-phosphopantetheine + ATP + H(+) = 3'-dephospho-CoA + diphosphate. The protein operates within cofactor biosynthesis; coenzyme A biosynthesis; CoA from (R)-pantothenate: step 4/5. Functionally, reversibly transfers an adenylyl group from ATP to 4'-phosphopantetheine, yielding dephospho-CoA (dPCoA) and pyrophosphate. In Vesicomyosocius okutanii subsp. Calyptogena okutanii (strain HA), this protein is Phosphopantetheine adenylyltransferase.